Here is a 136-residue protein sequence, read N- to C-terminus: Protein NrdI (136 aa).

The protein belongs to the NrdI family.

Probably involved in ribonucleotide reductase function. The sequence is that of Protein NrdI from Citrobacter koseri (strain ATCC BAA-895 / CDC 4225-83 / SGSC4696).